A 154-amino-acid polypeptide reads, in one-letter code: Myoglobin (154 aa).

A Globin domain is found at 2-148; that stretch reads GLSDGEWQLV…FRNDMAAKYK (147 aa). Ser4 carries the phosphoserine modification. Nitrite is bound at residue His65. His65 contacts O2. Thr68 carries the post-translational modification Phosphothreonine. His94 lines the heme b pocket.

The protein belongs to the globin family. In terms of assembly, monomeric.

It is found in the cytoplasm. Its subcellular location is the sarcoplasm. The enzyme catalyses Fe(III)-heme b-[protein] + nitric oxide + H2O = Fe(II)-heme b-[protein] + nitrite + 2 H(+). It catalyses the reaction H2O2 + AH2 = A + 2 H2O. Monomeric heme protein which primary function is to store oxygen and facilitate its diffusion within muscle tissues. Reversibly binds oxygen through a pentacoordinated heme iron and enables its timely and efficient release as needed during periods of heightened demand. Depending on the oxidative conditions of tissues and cells, and in addition to its ability to bind oxygen, it also has a nitrite reductase activity whereby it regulates the production of bioactive nitric oxide. Under stress conditions, like hypoxia and anoxia, it also protects cells against reactive oxygen species thanks to its pseudoperoxidase activity. In Aotus trivirgatus (Three-striped night monkey), this protein is Myoglobin (MB).